We begin with the raw amino-acid sequence, 202 residues long: Glycerol-3-phosphate acyltransferase (202 aa).

The next 5 membrane-spanning stretches (helical) occupy residues 6–26, 56–76, 82–102, 118–138, and 141–161; these read LTLGMILSAYLAGSISSAVLV, SAALVLFFDMLKGALPAYIAF, SVSLGIIAIAACLGHIFPIFF, APIGPELALLLMGSWVLMVLI, and YSSLAAIVTALLAPFYTWYLD.

It belongs to the PlsY family. As to quaternary structure, probably interacts with PlsX.

It is found in the cell inner membrane. The enzyme catalyses an acyl phosphate + sn-glycerol 3-phosphate = a 1-acyl-sn-glycero-3-phosphate + phosphate. It functions in the pathway lipid metabolism; phospholipid metabolism. In terms of biological role, catalyzes the transfer of an acyl group from acyl-phosphate (acyl-PO(4)) to glycerol-3-phosphate (G3P) to form lysophosphatidic acid (LPA). This enzyme utilizes acyl-phosphate as fatty acyl donor, but not acyl-CoA or acyl-ACP. This Shewanella woodyi (strain ATCC 51908 / MS32) protein is Glycerol-3-phosphate acyltransferase.